We begin with the raw amino-acid sequence, 244 residues long: 1-(5-phosphoribosyl)-5-[(5-phosphoribosylamino)methylideneamino] imidazole-4-carboxamide isomerase (244 aa).

Aspartate 8 functions as the Proton acceptor in the catalytic mechanism. Catalysis depends on aspartate 129, which acts as the Proton donor.

Belongs to the HisA/HisF family.

It localises to the cytoplasm. The enzyme catalyses 1-(5-phospho-beta-D-ribosyl)-5-[(5-phospho-beta-D-ribosylamino)methylideneamino]imidazole-4-carboxamide = 5-[(5-phospho-1-deoxy-D-ribulos-1-ylimino)methylamino]-1-(5-phospho-beta-D-ribosyl)imidazole-4-carboxamide. The protein operates within amino-acid biosynthesis; L-histidine biosynthesis; L-histidine from 5-phospho-alpha-D-ribose 1-diphosphate: step 4/9. This is 1-(5-phosphoribosyl)-5-[(5-phosphoribosylamino)methylideneamino] imidazole-4-carboxamide isomerase from Maricaulis maris (strain MCS10) (Caulobacter maris).